The primary structure comprises 358 residues: tRNA-specific 2-thiouridylase MnmA (358 aa).

Residues 8–15 and L34 each bind ATP; that span reads GLSGGVDS. The active-site Nucleophile is C95. C95 and C194 are joined by a disulfide. G120 contacts ATP. Residues 144-146 form an interaction with tRNA region; sequence KDQ. Residue C194 is the Cysteine persulfide intermediate of the active site. The tract at residues 299–300 is interaction with tRNA; that stretch reads RY.

This sequence belongs to the MnmA/TRMU family.

The protein resides in the cytoplasm. The enzyme catalyses S-sulfanyl-L-cysteinyl-[protein] + uridine(34) in tRNA + AH2 + ATP = 2-thiouridine(34) in tRNA + L-cysteinyl-[protein] + A + AMP + diphosphate + H(+). Functionally, catalyzes the 2-thiolation of uridine at the wobble position (U34) of tRNA, leading to the formation of s(2)U34. In Synechocystis sp. (strain ATCC 27184 / PCC 6803 / Kazusa), this protein is tRNA-specific 2-thiouridylase MnmA.